Consider the following 501-residue polypeptide: Pyruvate kinase (501 aa).

Position 50 (arginine 50) interacts with substrate. K(+)-binding residues include asparagine 52, serine 54, aspartate 85, and threonine 86. 52–55 provides a ligand contact to ATP; it reads NFSH. 2 residues coordinate ATP: arginine 92 and lysine 178. Residue glutamate 243 coordinates Mg(2+). Positions 266, 267, and 299 each coordinate substrate. A Mg(2+)-binding site is contributed by aspartate 267.

The protein belongs to the pyruvate kinase family. In terms of assembly, homotetramer. Mg(2+) serves as cofactor. Requires K(+) as cofactor.

It carries out the reaction pyruvate + ATP = phosphoenolpyruvate + ADP + H(+). It participates in carbohydrate degradation; glycolysis; pyruvate from D-glyceraldehyde 3-phosphate: step 5/5. This Naumovozyma castellii (Yeast) protein is Pyruvate kinase (PYK1).